Reading from the N-terminus, the 485-residue chain is MALAVEKTSSGREYKVKDMSQADFGRLEIELAEVEMPGLMACRTEFGPSQPFKGAKITGSLHMTIQTAVLIETLTALGAEVRWCSCNIFSTQDHAAAAIARDSAAVFAWKGETLQEYWWCTERALDWGAGGGPDLIVDDGGDATLLIHEGVKAEEEYEKNGTIPDPTSTDNPEFQLVLGLIRDSLKVDPKRYHKMKTRLVGVSEETTTGVKRLYQMQATGTLLFPAINVNDSVTKSKFDNLYGCRHSLPDGLMRATDVMIAGKVGVVCGYGDVGKGCALALKAAGARVIVTEIDPICALQALMEGFQILTLEDVVSEADIFVTTTGNKDIIMVDHMRKMKNNAIVCNIGHFDNEIDMLGLENYPGVKRITIKPQTDRFVFPETNTGIIVLAEGRLMKLGCATGHPSFVMSCSFTNQVIAQLELWNERASGKYEKKVYVLPKHLDEKVAALHLGKLGAKLTKLSKDQADYISVPVEGPYKPAHYRY.

Residues threonine 64, aspartate 139, and glutamate 205 each contribute to the substrate site. 206–208 is an NAD(+) binding site; the sequence is TTT. Positions 235 and 239 each coordinate substrate. Residues asparagine 240, 269-274, glutamate 292, asparagine 327, and 348-350 contribute to the NAD(+) site; these read GYGDVG and IGH.

It belongs to the adenosylhomocysteinase family. In terms of assembly, homotetramer. Requires NAD(+) as cofactor.

The catalysed reaction is S-adenosyl-L-homocysteine + H2O = L-homocysteine + adenosine. It functions in the pathway amino-acid biosynthesis; L-homocysteine biosynthesis; L-homocysteine from S-adenosyl-L-homocysteine: step 1/1. Adenosylhomocysteine is a competitive inhibitor of S-adenosyl-L-methionine-dependent methyl transferase reactions; therefore adenosylhomocysteinase may play a key role in the control of methylations via regulation of the intracellular concentration of adenosylhomocysteine. The protein is Adenosylhomocysteinase (SAHH) of Mesembryanthemum crystallinum (Common ice plant).